Here is a 127-residue protein sequence, read N- to C-terminus: Fluoride-specific ion channel FluC (127 aa).

4 consecutive transmembrane segments (helical) span residues 3–23 (ALLL…LLGV), 36–56 (GTFA…GGLA), 72–92 (VGAL…ALMI), and 101–121 (FAYS…GLLL). G76 and T79 together coordinate Na(+).

It belongs to the fluoride channel Fluc/FEX (TC 1.A.43) family.

It localises to the cell inner membrane. The enzyme catalyses fluoride(in) = fluoride(out). Its activity is regulated as follows. Na(+) is not transported, but it plays an essential structural role and its presence is essential for fluoride channel function. Fluoride-specific ion channel. Important for reducing fluoride concentration in the cell, thus reducing its toxicity. The protein is Fluoride-specific ion channel FluC of Phenylobacterium zucineum (strain HLK1).